The following is a 505-amino-acid chain: tRNA-2-methylthio-N(6)-dimethylallyladenosine synthase (505 aa).

The MTTase N-terminal domain maps to 14–132 (RTYEVRTYGC…LPVLLERARV (119 aa)). Positions 23, 61, 95, 169, 173, and 176 each coordinate [4Fe-4S] cluster. In terms of domain architecture, Radical SAM core spans 155–386 (RESAYAAWVS…ALQEEISWEE (232 aa)). Positions 388 to 456 (KKQVGRTLEL…PHHLLAEGPV (69 aa)) constitute a TRAM domain.

It belongs to the methylthiotransferase family. MiaB subfamily. Monomer. [4Fe-4S] cluster is required as a cofactor.

The protein localises to the cytoplasm. It catalyses the reaction N(6)-dimethylallyladenosine(37) in tRNA + (sulfur carrier)-SH + AH2 + 2 S-adenosyl-L-methionine = 2-methylsulfanyl-N(6)-dimethylallyladenosine(37) in tRNA + (sulfur carrier)-H + 5'-deoxyadenosine + L-methionine + A + S-adenosyl-L-homocysteine + 2 H(+). Catalyzes the methylthiolation of N6-(dimethylallyl)adenosine (i(6)A), leading to the formation of 2-methylthio-N6-(dimethylallyl)adenosine (ms(2)i(6)A) at position 37 in tRNAs that read codons beginning with uridine. This chain is tRNA-2-methylthio-N(6)-dimethylallyladenosine synthase, found in Streptomyces viridosporus (strain ATCC 14672 / DSM 40746 / JCM 4963 / KCTC 9882 / NRRL B-12104 / FH 1290) (Streptomyces ghanaensis).